A 476-amino-acid chain; its full sequence is Bifunctional protein GlmU (476 aa).

The segment at 1-232 is pyrophosphorylase; that stretch reads MDNLAAIILA…PVEVMGINDR (232 aa). UDP-N-acetyl-alpha-D-glucosamine-binding positions include 9-12, Lys-23, Gln-75, and 80-81; these read LAAG and GT. Asp-105 is a Mg(2+) binding site. UDP-N-acetyl-alpha-D-glucosamine is bound by residues Gly-142, Glu-157, Asn-172, and Asn-230. Residue Asn-230 participates in Mg(2+) binding. The interval 233–253 is linker; sequence VQLAEAARHARRRIAEEHMLN. Positions 254–476 are N-acetyltransferase; it reads GVTLVDPAAT…EGWKLRKRDQ (223 aa). Residues Arg-353 and Lys-371 each coordinate UDP-N-acetyl-alpha-D-glucosamine. The active-site Proton acceptor is His-383. The UDP-N-acetyl-alpha-D-glucosamine site is built by Tyr-386 and Asn-397. Residues 406–407, Ser-425, Ala-443, and Arg-460 contribute to the acetyl-CoA site; that span reads NY.

In the N-terminal section; belongs to the N-acetylglucosamine-1-phosphate uridyltransferase family. It in the C-terminal section; belongs to the transferase hexapeptide repeat family. As to quaternary structure, homotrimer. The cofactor is Mg(2+).

It localises to the cytoplasm. It catalyses the reaction alpha-D-glucosamine 1-phosphate + acetyl-CoA = N-acetyl-alpha-D-glucosamine 1-phosphate + CoA + H(+). The catalysed reaction is N-acetyl-alpha-D-glucosamine 1-phosphate + UTP + H(+) = UDP-N-acetyl-alpha-D-glucosamine + diphosphate. The protein operates within nucleotide-sugar biosynthesis; UDP-N-acetyl-alpha-D-glucosamine biosynthesis; N-acetyl-alpha-D-glucosamine 1-phosphate from alpha-D-glucosamine 6-phosphate (route II): step 2/2. It participates in nucleotide-sugar biosynthesis; UDP-N-acetyl-alpha-D-glucosamine biosynthesis; UDP-N-acetyl-alpha-D-glucosamine from N-acetyl-alpha-D-glucosamine 1-phosphate: step 1/1. It functions in the pathway bacterial outer membrane biogenesis; LPS lipid A biosynthesis. Catalyzes the last two sequential reactions in the de novo biosynthetic pathway for UDP-N-acetylglucosamine (UDP-GlcNAc). The C-terminal domain catalyzes the transfer of acetyl group from acetyl coenzyme A to glucosamine-1-phosphate (GlcN-1-P) to produce N-acetylglucosamine-1-phosphate (GlcNAc-1-P), which is converted into UDP-GlcNAc by the transfer of uridine 5-monophosphate (from uridine 5-triphosphate), a reaction catalyzed by the N-terminal domain. The chain is Bifunctional protein GlmU from Geobacter sulfurreducens (strain ATCC 51573 / DSM 12127 / PCA).